Here is a 131-residue protein sequence, read N- to C-terminus: Hydrogenase maturation factor HypA (131 aa).

Histidine 2 lines the Ni(2+) pocket. 4 residues coordinate Zn(2+): cysteine 73, cysteine 76, cysteine 105, and cysteine 108.

It belongs to the HypA/HybF family.

Involved in the maturation of [NiFe] hydrogenases. Required for nickel insertion into the metal center of the hydrogenase. In Thermomicrobium roseum (strain ATCC 27502 / DSM 5159 / P-2), this protein is Hydrogenase maturation factor HypA.